The sequence spans 499 residues: Probable cytosol aminopeptidase (499 aa).

Mn(2+) is bound by residues K262 and D267. K274 is a catalytic residue. Mn(2+) is bound by residues D285, D344, and E346. R348 is an active-site residue.

The protein belongs to the peptidase M17 family. The cofactor is Mn(2+).

It localises to the cytoplasm. The enzyme catalyses Release of an N-terminal amino acid, Xaa-|-Yaa-, in which Xaa is preferably Leu, but may be other amino acids including Pro although not Arg or Lys, and Yaa may be Pro. Amino acid amides and methyl esters are also readily hydrolyzed, but rates on arylamides are exceedingly low.. It catalyses the reaction Release of an N-terminal amino acid, preferentially leucine, but not glutamic or aspartic acids.. Functionally, presumably involved in the processing and regular turnover of intracellular proteins. Catalyzes the removal of unsubstituted N-terminal amino acids from various peptides. In Protochlamydia amoebophila (strain UWE25), this protein is Probable cytosol aminopeptidase.